The chain runs to 344 residues: Phenylalanine--tRNA ligase alpha subunit (344 aa).

Mg(2+) is bound at residue E269.

It belongs to the class-II aminoacyl-tRNA synthetase family. Phe-tRNA synthetase alpha subunit type 1 subfamily. As to quaternary structure, tetramer of two alpha and two beta subunits. Mg(2+) serves as cofactor.

The protein localises to the cytoplasm. It catalyses the reaction tRNA(Phe) + L-phenylalanine + ATP = L-phenylalanyl-tRNA(Phe) + AMP + diphosphate + H(+). The polypeptide is Phenylalanine--tRNA ligase alpha subunit (Ralstonia nicotianae (strain ATCC BAA-1114 / GMI1000) (Ralstonia solanacearum)).